Consider the following 454-residue polypeptide: Lipase member H (454 aa).

A signal peptide spans 1-23; sequence MIYRKIIWGILYVTLMLFDTHRA. N-linked (GlcNAc...) asparagine glycosylation is found at asparagine 73, asparagine 137, and asparagine 151. The Nucleophile role is filled by serine 161. Catalysis depends on aspartate 185, which acts as the Charge relay system. A disulfide bridge links cysteine 240 with cysteine 253. The active-site Charge relay system is histidine 255. Asparagine 267 is a glycosylation site (N-linked (GlcNAc...) asparagine). Disulfide bonds link cysteine 277-cysteine 288 and cysteine 291-cysteine 299. Asparagine 358 carries an N-linked (GlcNAc...) asparagine glycan. The cysteines at positions 430 and 449 are disulfide-linked.

The protein belongs to the AB hydrolase superfamily. Lipase family.

It localises to the secreted. It is found in the cell membrane. The catalysed reaction is 1-hexadecanoyl-2-(9Z-octadecenoyl)-sn-glycero-3-phosphate + H2O = 2-(9Z-octadecenoyl)-sn-glycero-3-phosphate + hexadecanoate + H(+). Functionally, hydrolyzes specifically phosphatidic acid (PA) to produce 2-acyl lysophosphatidic acid (LPA; a potent bioactive lipid mediator) and fatty acid. Does not hydrolyze other phospholipids, like phosphatidylserine (PS), phosphatidylcholine (PC) and phosphatidylethanolamine (PE) or triacylglycerol (TG). This is Lipase member H (liph) from Danio rerio (Zebrafish).